The primary structure comprises 768 residues: Solabiose phosphorylase (768 aa).

Asp-456 serves as the catalytic Proton donor.

Belongs to the glycosyl hydrolase 94 family.

It catalyses the reaction solabiose + phosphate = D-galactose + alpha-D-glucose 1-phosphate. Its function is as follows. Catalyzes the reversible phosphorolysis of solabiose. Catalyzes the phosphorolysis and synthesis of solabiose through a sequential bi-bi mechanism involving the formation of a ternary complex. Is probably involved in the metabolism of solabiose released from solabiose-containing compounds. This chain is Solabiose phosphorylase, found in Paenibacillus borealis.